The sequence spans 255 residues: Small ribosomal subunit protein eS1 (255 aa).

The segment covering 1–18 (MAVGKNKRLSKGKKGLKK) has biased composition (basic residues). Residues 1–28 (MAVGKNKRLSKGKKGLKKRTQDPFSRKD) form a disordered region. Position 2 is an N-acetylalanine; partial (Ala2). Over residues 19-28 (RTQDPFSRKD) the composition is skewed to basic and acidic residues.

The protein belongs to the eukaryotic ribosomal protein eS1 family. In terms of assembly, component of the small ribosomal subunit. Mature ribosomes consist of a small (40S) and a large (60S) subunit. The 40S subunit contains about 33 different proteins and 1 molecule of RNA (18S). The 60S subunit contains about 49 different proteins and 3 molecules of RNA (25S, 5.8S and 5S).

It localises to the cytoplasm. The protein is Small ribosomal subunit protein eS1 of Paracoccidioides lutzii (strain ATCC MYA-826 / Pb01) (Paracoccidioides brasiliensis).